The sequence spans 392 residues: 4-hydroxy-3-methylbut-2-en-1-yl diphosphate synthase (flavodoxin) (392 aa).

4 residues coordinate [4Fe-4S] cluster: Cys-280, Cys-283, Cys-315, and Glu-322. A compositionally biased stretch (basic and acidic residues) spans 371 to 380 (TEKGSDHCSE). Positions 371–392 (TEKGSDHCSETTRSGSPVVTVN) are disordered. Residues 381-392 (TTRSGSPVVTVN) are compositionally biased toward polar residues.

It belongs to the IspG family. Requires [4Fe-4S] cluster as cofactor.

The enzyme catalyses (2E)-4-hydroxy-3-methylbut-2-enyl diphosphate + oxidized [flavodoxin] + H2O + 2 H(+) = 2-C-methyl-D-erythritol 2,4-cyclic diphosphate + reduced [flavodoxin]. Its pathway is isoprenoid biosynthesis; isopentenyl diphosphate biosynthesis via DXP pathway; isopentenyl diphosphate from 1-deoxy-D-xylulose 5-phosphate: step 5/6. Functionally, converts 2C-methyl-D-erythritol 2,4-cyclodiphosphate (ME-2,4cPP) into 1-hydroxy-2-methyl-2-(E)-butenyl 4-diphosphate. The chain is 4-hydroxy-3-methylbut-2-en-1-yl diphosphate synthase (flavodoxin) from Mycobacterium leprae (strain Br4923).